Here is a 469-residue protein sequence, read N- to C-terminus: MAFPADLVGGLPTAAYQVEGGWDADGRGPCVWDTFTHQGGERVFKNQTGDVACGSYTLWEEDLKCIKQLGLTHYRFSISWSRLLPDGTTGFINQKGVDYYNKIIDDLLTNGVTPVVTLYHFDLPQALEDQGGWLSEAIIEVFDKYAQFCFSTFGNRVRQWITINEPNVLCAMGYDLGFFAPGVSQIGTGGYQAAHNMIKAHARAWHSYDSLFREKQKGMVSLSLFCIWPQPENPNSVLDQKAAERAINFQFDFFAKPIFIDGDYPELVKSQIASMSEKQGYPSSRLSKFTEEEKKMIKGTADFFAVQYYTTRFIRHKENKEAELGILQDAEIELFSDPSWKGVGWVRVVPWGIRKLLNYIKDTYNNPVIYITENGFPQDDPPSIDDTQRWECFRQTFEELFKAIHVDKVNLQLYCAWSLLDNFEWNDGYSKRFGLFHVDFEDPAKPRVPYTSAKEYAKIIRNNGLERPQ.

Positions 17, 120, and 164 each coordinate substrate. Catalysis depends on Glu165, which acts as the Proton donor. Tyr309 is a binding site for substrate. Glu373 acts as the Nucleophile in catalysis. Residues Trp417 and 424–425 (EW) contribute to the substrate site.

Belongs to the glycosyl hydrolase 1 family. Klotho subfamily. Post-translationally, the N-terminus is blocked. As to expression, present in hepatocytes (at protein level).

The protein resides in the cytoplasm. Its subcellular location is the cytosol. The catalysed reaction is Hydrolysis of terminal, non-reducing beta-D-glucosyl residues with release of beta-D-glucose.. It catalyses the reaction a beta-D-glucosyl-(1&lt;-&gt;1')-N-acylsphing-4-enine + H2O = an N-acylsphing-4-enine + D-glucose. The enzyme catalyses a beta-D-galactosyl-(1&lt;-&gt;1')-N-acylsphing-4-enine + H2O = an N-acylsphing-4-enine + D-galactose. It carries out the reaction beta-D-glucosyl-(1&lt;-&gt;1)-sphing-4-enine + H2O = sphing-4-enine + D-glucose. The catalysed reaction is beta-D-glucosyl-(1&lt;-&gt;1)-N-octadecanoylsphing-4-enine + H2O = N-octadecanoylsphing-4-enine + D-glucose. It catalyses the reaction beta-D-galactosyl-(1&lt;-&gt;1)-sphing-4-enine + H2O = sphing-4-enine + D-galactose. The enzyme catalyses beta-D-galactosyl-(1&lt;-&gt;1')-N-octadecanoylsphing-4-enine + H2O = N-octadecanoylsphing-4-enine + D-galactose. It carries out the reaction a beta-D-xylosyl-(1&lt;-&gt;1')-N-acylsphing-4-enine + cholesterol = cholesteryl 3-beta-D-xyloside + an N-acylsphing-4-enine. Inhibited by 2,4-dinitrophenyl-2-fluoro-2-deoxy-beta-D-glucopyranoside. In terms of biological role, neutral cytosolic beta-glycosidase with a broad substrate specificity that could play a role in the catabolism of glycosylceramides. Has a significant glucosylceramidase activity in vitro. However, that activity is relatively low and its significance in vivo is not clear. Hydrolyzes galactosylceramide/GalCer, glucosylsphingosine/GlcSph and galactosylsphingosine/GalSph. However, the in vivo relevance of these activities is unclear. It can also hydrolyze a broad variety of dietary glycosides including phytoestrogens, flavonols, flavones, flavanones and cyanogens in vitro and could therefore play a role in the metabolism of xenobiotics. Possesses transxylosylase activity in vitro using xylosylated ceramides/XylCers (such as beta-D-xylosyl-(1&lt;-&gt;1')-N-acylsphing-4-enine) as xylosyl donors and cholesterol as acceptor. Could also play a role in the catabolism of cytosolic sialyl free N-glycans. This is Cytosolic beta-glucosidase from Cavia porcellus (Guinea pig).